We begin with the raw amino-acid sequence, 177 residues long: Translation initiation factor IF-3 (177 aa).

This sequence belongs to the IF-3 family. Monomer.

Its subcellular location is the cytoplasm. IF-3 binds to the 30S ribosomal subunit and shifts the equilibrium between 70S ribosomes and their 50S and 30S subunits in favor of the free subunits, thus enhancing the availability of 30S subunits on which protein synthesis initiation begins. This chain is Translation initiation factor IF-3, found in Elusimicrobium minutum (strain Pei191).